A 306-amino-acid chain; its full sequence is 17-beta-hydroxysteroid dehydrogenase type 3 (306 aa).

44 to 73 (GQWAVITGAGDGIGKAYSFELARHGLNVVL) provides a ligand contact to NADP(+). Substrate is bound at residue Ser181. Tyr194 acts as the Proton acceptor in catalysis.

This sequence belongs to the short-chain dehydrogenases/reductases (SDR) family. 17-beta-HSD 3 subfamily.

The protein localises to the endoplasmic reticulum. The catalysed reaction is a 17beta-hydroxy steroid + NADP(+) = a 17-oxo steroid + NADPH + H(+). It catalyses the reaction testosterone + NADP(+) = androst-4-ene-3,17-dione + NADPH + H(+). It carries out the reaction 17beta-estradiol + NADP(+) = estrone + NADPH + H(+). The enzyme catalyses 3beta-hydroxyandrost-5-en-17-one + NADPH + H(+) = androst-5-en-3beta,17beta-diol + NADP(+). The catalysed reaction is 17beta-hydroxy-5alpha-androstan-3-one + NADP(+) = 5alpha-androstan-3,17-dione + NADPH + H(+). It catalyses the reaction androsterone + NADPH + H(+) = 5alpha-androstane-3alpha,17beta-diol + NADP(+). It carries out the reaction 3beta-hydroxy-5alpha-androstan-17-one + NADPH + H(+) = 5alpha-androstane-3beta,17beta-diol + NADP(+). The enzyme catalyses androst-4-ene-3,11,17-trione + NADPH + H(+) = 17beta-hydroxyandrost-4-ene-3,11-dione + NADP(+). The catalysed reaction is 11beta-hydroxyandrost-4-ene-3,17-dione + NADPH + H(+) = 11beta,17beta-dihydroxyandrost-4-ene-3-one + NADP(+). The protein operates within hormone biosynthesis; testosterone biosynthesis. It participates in steroid metabolism. In terms of biological role, catalyzes the conversion of 17-oxosteroids to 17beta-hydroxysteroids. Favors the reduction of androstenedione to testosterone. Testosterone is the key androgen driving male development and function. Uses NADPH while the two other EDH17B enzymes use NADH. Androgens such as epiandrosterone, dehydroepiandrosterone, androsterone and androstanedione are accepted as substrates and reduced at C-17. Can reduce 11-ketoandrostenedione as well as 11beta-hydroxyandrostenedione at C-17 to the respective testosterone forms. Plays a role in the rate-limiting-step for the maximum level of testosterone production by the testis but does not affect basal testosterone production. The polypeptide is 17-beta-hydroxysteroid dehydrogenase type 3 (Rattus norvegicus (Rat)).